Here is a 754-residue protein sequence, read N- to C-terminus: uncharacterized protein (754 aa).

Helical transmembrane passes span 3 to 23 (ITTV…LPQL), 24 to 44 (PGTL…FIPV), 50 to 70 (IALT…ILWA), 223 to 243 (HLMA…AGLI), 254 to 274 (WIHW…YAWL), 320 to 340 (VAIL…LIFW), 370 to 390 (LLLM…SFIA), 392 to 412 (LLAI…AMVV), 446 to 466 (WINI…LLVV), and 471 to 491 (AWRT…WPLW).

The protein to B.subtilis ComEC, N.gonorrhoeae ComA, and H.influenzae Rec2.

It localises to the cell membrane. This is an uncharacterized protein from Escherichia coli (strain K12).